Here is a 409-residue protein sequence, read N- to C-terminus: Elongation factor Tu, chloroplastic (409 aa).

The tr-type G domain maps to 10–214; that stretch reads KPHVNIGTIG…AVDTYIPTPE (205 aa). A G1 region spans residues 19–26; the sequence is GHVDHGKT. Residue 19-26 coordinates GTP; sequence GHVDHGKT. Threonine 26 provides a ligand contact to Mg(2+). Residues 60–64 form a G2 region; that stretch reads GITIN. Positions 81–84 are G3; the sequence is DCPG. Residues 81-85 and 136-139 contribute to the GTP site; these read DCPGH and NKED. The segment at 136–139 is G4; it reads NKED. A G5 region spans residues 174 to 176; that stretch reads SAL.

The protein belongs to the TRAFAC class translation factor GTPase superfamily. Classic translation factor GTPase family. EF-Tu/EF-1A subfamily.

The protein resides in the plastid. Its subcellular location is the chloroplast. The enzyme catalyses GTP + H2O = GDP + phosphate + H(+). GTP hydrolase that promotes the GTP-dependent binding of aminoacyl-tRNA to the A-site of ribosomes during protein biosynthesis. In Porphyra purpurea (Red seaweed), this protein is Elongation factor Tu, chloroplastic (tufA).